Here is a 677-residue protein sequence, read N- to C-terminus: DNA ligase (677 aa).

Residues 32 to 36 (DAQYD), 81 to 82 (SL), and Glu-112 each bind NAD(+). The active-site N6-AMP-lysine intermediate is Lys-114. NAD(+) contacts are provided by Arg-135, Glu-171, Lys-288, and Lys-312. Zn(2+) contacts are provided by Cys-416, Cys-419, Cys-434, and Cys-439. The 80-residue stretch at 598-677 (NKNMPFSGME…REFINMLEQS (80 aa)) folds into the BRCT domain.

It belongs to the NAD-dependent DNA ligase family. LigA subfamily. The cofactor is Mg(2+). It depends on Mn(2+) as a cofactor.

It catalyses the reaction NAD(+) + (deoxyribonucleotide)n-3'-hydroxyl + 5'-phospho-(deoxyribonucleotide)m = (deoxyribonucleotide)n+m + AMP + beta-nicotinamide D-nucleotide.. Its function is as follows. DNA ligase that catalyzes the formation of phosphodiester linkages between 5'-phosphoryl and 3'-hydroxyl groups in double-stranded DNA using NAD as a coenzyme and as the energy source for the reaction. It is essential for DNA replication and repair of damaged DNA. The sequence is that of DNA ligase from Dehalococcoides mccartyi (strain CBDB1).